A 621-amino-acid chain; its full sequence is Replication factor A protein 1 (621 aa).

N-acetylserine is present on Ser2. A Phosphoserine; by ATM or ATR modification is found at Ser178. A DNA-binding region (OB) is located at residues 197 to 284 (WTIKARVSYK…PYELNLDRDT (88 aa)). The C4-type zinc-finger motif lies at 486–508 (CSNENCNKKVLEQPDGTWRCEKC).

The protein belongs to the replication factor A protein 1 family. As to quaternary structure, component of the heterotrimeric canonical replication protein A complex (RPA). Interacts with POB3. In terms of processing, the N-terminus is blocked.

It is found in the nucleus. As part of the replication protein A (RPA/RP-A), a single-stranded DNA-binding heterotrimeric complex, may play an essential role in DNA replication, recombination and repair. Binds and stabilizes single-stranded DNA intermediates, preventing complementary DNA reannealing and recruiting different proteins involved in DNA metabolism. Binds to single-stranded sequences participating in DNA replication in addition to those mediating transcriptional repression (URS1) and activation (CAR1). Stimulates the activity of a cognate strand exchange protein (SEP1). It cooperates with T-AG and DNA topoisomerase I to unwind template DNA containing the simian virus 40 origin of DNA replication. This Saccharomyces cerevisiae (strain ATCC 204508 / S288c) (Baker's yeast) protein is Replication factor A protein 1 (RFA1).